Reading from the N-terminus, the 115-residue chain is NAD(P)H-quinone oxidoreductase subunit M (115 aa).

Belongs to the complex I NdhM subunit family. In terms of assembly, NDH-1 can be composed of about 15 different subunits; different subcomplexes with different compositions have been identified which probably have different functions.

The protein resides in the cellular thylakoid membrane. The catalysed reaction is a plastoquinone + NADH + (n+1) H(+)(in) = a plastoquinol + NAD(+) + n H(+)(out). It carries out the reaction a plastoquinone + NADPH + (n+1) H(+)(in) = a plastoquinol + NADP(+) + n H(+)(out). Its function is as follows. NDH-1 shuttles electrons from an unknown electron donor, via FMN and iron-sulfur (Fe-S) centers, to quinones in the respiratory and/or the photosynthetic chain. The immediate electron acceptor for the enzyme in this species is believed to be plastoquinone. Couples the redox reaction to proton translocation, and thus conserves the redox energy in a proton gradient. Cyanobacterial NDH-1 also plays a role in inorganic carbon-concentration. The chain is NAD(P)H-quinone oxidoreductase subunit M from Prochlorococcus marinus (strain AS9601).